The sequence spans 322 residues: tRNA dimethylallyltransferase (322 aa).

12 to 19 (GPTAAGKT) provides a ligand contact to ATP. A substrate-binding site is contributed by 14–19 (TAAGKT). Interaction with substrate tRNA stretches follow at residues 37 to 40 (DSAL) and 160 to 164 (QRLIR).

The protein belongs to the IPP transferase family. As to quaternary structure, monomer. It depends on Mg(2+) as a cofactor.

It catalyses the reaction adenosine(37) in tRNA + dimethylallyl diphosphate = N(6)-dimethylallyladenosine(37) in tRNA + diphosphate. Functionally, catalyzes the transfer of a dimethylallyl group onto the adenine at position 37 in tRNAs that read codons beginning with uridine, leading to the formation of N6-(dimethylallyl)adenosine (i(6)A). The polypeptide is tRNA dimethylallyltransferase (Pseudomonas putida (Arthrobacter siderocapsulatus)).